The following is a 279-amino-acid chain: Calcium-binding protein 4 (279 aa).

The segment covering 1-12 has biased composition (basic and acidic residues); it reads MAEEQGRGRHGP. Residues 1-114 are disordered; the sequence is MAEEQGRGRH…PGPQHDAAQR (114 aa). The residue at position 42 (serine 42) is a Phosphoserine. A compositionally biased stretch (polar residues) spans 55-65; it reads GPSSSGEQTPM. 4 consecutive EF-hand domains span residues 133-168, 187-204, 210-245, and 247-279; these read EELD…LGYM, GRVD…KLRE, LGLR…LLGE, and LVGP…LSRH. Ca(2+) contacts are provided by aspartate 146, aspartate 148, aspartate 150, tyrosine 152, and aspartate 157. Residues aspartate 223, aspartate 225, aspartate 227, arginine 229, glutamate 234, aspartate 260, asparagine 262, aspartate 264, threonine 266, and glutamate 271 each coordinate Ca(2+).

Interacts with CACNA1F and CACNA1D (via IQ domain) in a calcium independent manner. Interacts (via N-terminus) with UNC119. Phosphorylated. Phosphorylation levels change with the light conditions and regulate the activity. Expressed in the retina.

The protein localises to the cytoplasm. It localises to the presynapse. Functionally, may play a role in normal synaptic function, probably through regulation of Ca(2+) influx and neurotransmitter release in photoreceptor synaptic terminals and in auditory transmission. Modulator of CACNA1F, shifting the activation range to more hyperpolarized voltages. The chain is Calcium-binding protein 4 (CABP4) from Bos taurus (Bovine).